A 146-amino-acid polypeptide reads, in one-letter code: TFLTPEENGHVTSLWGKVDVEKVGGEALGRLLVVYPWTQRFFESFGDLSTPSAIMGNPKVKAHGKKVLSAFSEGLHHLDNLKGTFAQLSELHCDKLHVDPQNFTLLGNVLVIVLAEHFGNAFSPPVQAAFQKVVTGVANALAHKYH.

In terms of domain architecture, Globin spans F2–H146. Residue T12 is modified to Phosphothreonine. At S44 the chain carries Phosphoserine. K59 carries the N6-acetyllysine modification. Residue H63 participates in heme b binding. K82 is modified (N6-acetyllysine). H92 lines the heme b pocket. An S-nitrosocysteine modification is found at C93. K144 carries the post-translational modification N6-acetyllysine.

The protein belongs to the globin family. In terms of assembly, heterotetramer of two alpha chains and two beta chains. As to expression, red blood cells.

In terms of biological role, involved in oxygen transport from the lung to the various peripheral tissues. In Hapalemur griseus (Gray gentle lemur), this protein is Hemoglobin subunit beta (HBB).